Consider the following 1820-residue polypeptide: Afadin (1820 aa).

The region spanning 39–133 (FHGVMRFYFQ…GRFVLKNEND (95 aa)) is the Ras-associating 1 domain. The segment at 129 to 196 (KNENDAIPAK…PSQGDDSENS (68 aa)) is disordered. Residues 146-186 (EKQEKEGVIQNFKRTLSKKEKKEKKKKEKEALRQASDKEER) are a coiled coil. Residues 160-172 (TLSKKEKKEKKKK) are compositionally biased toward basic residues. Positions 173 to 189 (EKEALRQASDKEERPSQ) are enriched in basic and acidic residues. 3 positions are modified to phosphoserine: serine 216, serine 246, and serine 256. In terms of domain architecture, Ras-associating 2 spans 246–348 (SGGTLRIYAD…LVFQLKRRPP (103 aa)). Basic and acidic residues predominate over residues 356-371 (KKHVEGKSLKGKDRAD). The tract at residues 356-377 (KKHVEGKSLKGKDRADGSGYGS) is disordered. Residues serine 391 and serine 424 each carry the phosphoserine modification. Positions 426–492 (TEVGTEKFDD…LQSGMRLQFG (67 aa)) constitute an FHA domain. Residues serine 512, serine 557, serine 562, serine 655, serine 1083, serine 1107, serine 1126, serine 1140, serine 1143, serine 1172, serine 1173, serine 1182, and serine 1199 each carry the phosphoserine modification. Positions 538–569 (GDVHSGTALPASRSTTRLDSDRVSSASSTAER) are disordered. In terms of domain architecture, Dilute spans 653 to 908 (DISPTERTHK…IENVVAVAEN (256 aa)). A PDZ domain is found at 1007–1093 (IITVTLKKQN…VVTLEVAKQG (87 aa)). The disordered stretch occupies residues 1107–1194 (SPMMQRISDR…GKGPYTSGTA (88 aa)). Basic and acidic residues predominate over residues 1113 to 1128 (ISDRRGSGKPRPKSEG). Over residues 1132–1143 (YNNSAQNGSPES) the composition is skewed to polar residues. The segment covering 1152–1172 (SEPKKLPGDDRLMKNRADHRS) has biased composition (basic and acidic residues). The segment at 1203–1222 (GNLCTEEQSPPPRPEAYPIP) is disordered. Phosphothreonine is present on threonine 1232. Disordered regions lie at residues 1235–1278 (ASKS…SQEE), 1308–1527 (QSSS…KQQQ), and 1567–1716 (RLQE…LKTQ). Serine 1238 carries the post-translational modification Phosphoserine. Basic and acidic residues predominate over residues 1252-1262 (YEEKPHVHTES). The residue at position 1275 (serine 1275) is a Phosphoserine. A compositionally biased stretch (low complexity) spans 1309 to 1318 (SSSVESSTSS). Polar residues predominate over residues 1325 to 1337 (SSKSVTPASTLTK). The residue at position 1328 (serine 1328) is a Phosphoserine. Threonine 1330 carries the phosphothreonine modification. Residues 1364 to 1373 (LPPPPPPPPV) show a composition bias toward pro residues. Positions 1407–1440 (EWKKREEHQRWYEKEKARLEEERERKRREQERKL) are enriched in basic and acidic residues. Residues 1410 to 1446 (KREEHQRWYEKEKARLEEERERKRREQERKLGQMRSQ) are a coiled coil. Residues 1443–1457 (MRSQTLNPASFSPLA) show a composition bias toward polar residues. Basic and acidic residues predominate over residues 1487-1503 (TIERKDLQYITISKEEL). A phosphoserine mark is found at serine 1499 and serine 1510. Positions 1513–1526 (PWKRDAREKLEKQQ) are enriched in basic and acidic residues. Residues 1523 to 1561 (EKQQQMHIVDMLSKEIHELQNKVDRTAEESDRLRKLMLE) are a coiled coil. The span at 1576-1587 (EDDDEEEDDDVD) shows a compositional bias: acidic residues. Residues 1593 to 1665 (QRLEAERRAR…SRLEAERRRQ (73 aa)) are a coiled coil. Basic and acidic residues predominate over residues 1595-1675 (LEAERRARMQ…HEEAARRLLE (81 aa)). Serine 1694, serine 1719, serine 1770, and serine 1795 each carry phosphoserine. Residues 1734-1820 (EEEDYGPAGP…TELENELNTK (87 aa)) form a disordered region. Positions 1759–1772 (APREAREKLTRSQD) are enriched in basic and acidic residues. Residues 1800-1820 (VSDKVKASRKLTELENELNTK) are compositionally biased toward basic and acidic residues. Lysine 1803 bears the N6-acetyllysine mark.

Homodimer. Interacts with F-actin, nectin and NECTIN3. Essential for the association of nectin and E-cadherin. Isoform 2/s-afadin does not interact with F-actin. Interacts with ZO-1 and occludin, but probably in an indirect manner. Interacts with RIT1, RIT2, NRXN1 and BCR. Interacts with ADAM10; the interaction locks ADAM10 at adherens junctions following ADAM10 recruitment to adherens junctions by TSPAN33. As to expression, isoform 1 is expressed only in a restricted set of epithelial structures during early embryogenesis.

The protein resides in the cell junction. It localises to the adherens junction. Functionally, belongs to an adhesion system, probably together with the E-cadherin-catenin system, which plays a role in the organization of homotypic, interneuronal and heterotypic cell-cell adherens junctions (AJs). Nectin- and actin-filament-binding protein that connects nectin to the actin cytoskeleton. May play a key role in the organization of epithelial structures of the embryonic ectoderm. Essential for the organization of adherens junctions. The sequence is that of Afadin from Mus musculus (Mouse).